The chain runs to 62 residues: Small ribosomal subunit protein bS21 (62 aa).

The segment at 38–62 (YEKPSERRKRKMNAAVRKNRRTRHG) is disordered.

This sequence belongs to the bacterial ribosomal protein bS21 family.

This is Small ribosomal subunit protein bS21 from Gemmatimonas aurantiaca (strain DSM 14586 / JCM 11422 / NBRC 100505 / T-27).